Here is a 386-residue protein sequence, read N- to C-terminus: Acetate kinase (386 aa).

Mg(2+) is bound at residue Asn-7. Lys-14 contacts ATP. Residue Arg-78 participates in substrate binding. The active-site Proton donor/acceptor is Asp-135. ATP contacts are provided by residues 195-199 (HLGNG), 268-270 (DMR), and 316-320 (GIGEN). Glu-370 is a Mg(2+) binding site.

It belongs to the acetokinase family. In terms of assembly, homodimer. Requires Mg(2+) as cofactor. The cofactor is Mn(2+).

It localises to the cytoplasm. The enzyme catalyses acetate + ATP = acetyl phosphate + ADP. Its pathway is metabolic intermediate biosynthesis; acetyl-CoA biosynthesis; acetyl-CoA from acetate: step 1/2. Its function is as follows. Catalyzes the formation of acetyl phosphate from acetate and ATP. Can also catalyze the reverse reaction. The chain is Acetate kinase from Pseudarthrobacter chlorophenolicus (strain ATCC 700700 / DSM 12829 / CIP 107037 / JCM 12360 / KCTC 9906 / NCIMB 13794 / A6) (Arthrobacter chlorophenolicus).